Consider the following 124-residue polypeptide: uncharacterized protein (124 aa).

The signal sequence occupies residues 1–18 (MHIIKTLISVGVAFSLSA). A lipid anchor (N-palmitoyl cysteine) is attached at C19. A lipid anchor (S-diacylglycerol cysteine) is attached at C19.

Its subcellular location is the cell membrane. This is an uncharacterized protein from Pasteurella multocida (strain Pm70).